Here is a 521-residue protein sequence, read N- to C-terminus: Protein nucleotidyltransferase YdiU (521 aa).

Residues glycine 109, glycine 111, arginine 112, lysine 131, aspartate 143, glycine 144, arginine 194, and arginine 201 each contribute to the ATP site. Residue aspartate 270 is the Proton acceptor of the active site. Residues asparagine 271 and aspartate 280 each coordinate Mg(2+). ATP is bound at residue aspartate 280.

The protein belongs to the SELO family. Mg(2+) serves as cofactor. The cofactor is Mn(2+).

It carries out the reaction L-seryl-[protein] + ATP = 3-O-(5'-adenylyl)-L-seryl-[protein] + diphosphate. The catalysed reaction is L-threonyl-[protein] + ATP = 3-O-(5'-adenylyl)-L-threonyl-[protein] + diphosphate. The enzyme catalyses L-tyrosyl-[protein] + ATP = O-(5'-adenylyl)-L-tyrosyl-[protein] + diphosphate. It catalyses the reaction L-histidyl-[protein] + UTP = N(tele)-(5'-uridylyl)-L-histidyl-[protein] + diphosphate. It carries out the reaction L-seryl-[protein] + UTP = O-(5'-uridylyl)-L-seryl-[protein] + diphosphate. The catalysed reaction is L-tyrosyl-[protein] + UTP = O-(5'-uridylyl)-L-tyrosyl-[protein] + diphosphate. In terms of biological role, nucleotidyltransferase involved in the post-translational modification of proteins. It can catalyze the addition of adenosine monophosphate (AMP) or uridine monophosphate (UMP) to a protein, resulting in modifications known as AMPylation and UMPylation. The protein is Protein nucleotidyltransferase YdiU of Burkholderia mallei (strain ATCC 23344).